We begin with the raw amino-acid sequence, 490 residues long: Bifunctional protein HldE (490 aa).

The tract at residues 1–330 (MFDFDDLSQA…RKILPHAYRA (330 aa)) is ribokinase. Residue 205–208 (NRKE) participates in ATP binding. Residue Asp-275 is part of the active site. The cytidylyltransferase stretch occupies residues 358-490 (FTNGCFDILH…LVDRARSDQR (133 aa)).

In the N-terminal section; belongs to the carbohydrate kinase PfkB family. It in the C-terminal section; belongs to the cytidylyltransferase family. Homodimer.

The catalysed reaction is D-glycero-beta-D-manno-heptose 7-phosphate + ATP = D-glycero-beta-D-manno-heptose 1,7-bisphosphate + ADP + H(+). It catalyses the reaction D-glycero-beta-D-manno-heptose 1-phosphate + ATP + H(+) = ADP-D-glycero-beta-D-manno-heptose + diphosphate. The protein operates within nucleotide-sugar biosynthesis; ADP-L-glycero-beta-D-manno-heptose biosynthesis; ADP-L-glycero-beta-D-manno-heptose from D-glycero-beta-D-manno-heptose 7-phosphate: step 1/4. It functions in the pathway nucleotide-sugar biosynthesis; ADP-L-glycero-beta-D-manno-heptose biosynthesis; ADP-L-glycero-beta-D-manno-heptose from D-glycero-beta-D-manno-heptose 7-phosphate: step 3/4. Catalyzes the phosphorylation of D-glycero-D-manno-heptose 7-phosphate at the C-1 position to selectively form D-glycero-beta-D-manno-heptose-1,7-bisphosphate. Its function is as follows. Catalyzes the ADP transfer from ATP to D-glycero-beta-D-manno-heptose 1-phosphate, yielding ADP-D-glycero-beta-D-manno-heptose. In Bradyrhizobium sp. (strain ORS 278), this protein is Bifunctional protein HldE.